We begin with the raw amino-acid sequence, 1461 residues long: MNRIFKVLWNAATGTFVVTSETAKSRGKKNGRRKLAVSALIGLSSIMVSADALANAGNDTGDGVTPTGTQTGGKGWIAIGTDATANTYTNVDGASAAMGYKASAMGKWSTAIGSYSQSTGDSSLALGVKSVSAGDRAIAMGASSSASGSYSMAMGVYANSSGAKSVALGYKSVASGATSSALGYQATASGDDSAAFGNGAKAIGTNSVALGSGSVAQEDNSVAVGNSTTQRQITYVAKGDINSTSTDAVTGAQIYSLSQSVADRLGGGASVNSDGTVNAPLYEVGTGIYNNVGSALSALNTSITNTEASVAGLAEDALLWDESISAFSASHTGNASKITNLAAGTLAADSTDAVNGSQLFDTNEKVDKNTADIATNTGSINQNTADITANTDSINQNTTDIAANTTSINQNTTDIATNTTNINSLSDSVTTLTDDALLWDAASGAFSAKHNGSDSKITNLAAGTLAADSTDAVNGSQLFDTNEKVDQNTADITTNTNSINQNTTDIATNTTNINNLSDSITTLTDDALLWDAASGAFSANHNGSASKITNLAAGTLAADSTDAVNGSQLFATNENVSQNTADITTNTNSINQNTTDIATNTTSINNLSDSITTLTDDALLWDAASGTFSASRSGSASKITNLAAGTLAADSTDAVNGSQLYETNQKVDQNTSAIADINTSITNLSSDNLSWNETTSSFSASHGSSTTNKITNVAAGELSEESTDAVNGSQLFETNEKVDQNTTDIAANTTNITQNSTAIENLNTSVSDINTSITGLTDNALLWDEDTGAFSANHGGSTSKITNVAAGALSEDSTDAVNGSQLYETNQKVDQNTSAIADINTSITNLGTDALSWDDEEGAFSASHGTSGTNKITNVAAGEIASDSTDAVNGSQLYETNMLISQYNESISQLAGDTSETYITENGTGVKYIRTNDNGLEGQDAYATGNGATAVGYDAVASGAGSLALGQNSSSSIEGSIALGSGSTSNRAITTGIRETSATSDGVVIGYNTTDRELLGALSLGTDGESYRQITNVADGSEAQDAVTVRQLQNAIGAVTTTPTKYYHANSTEEDSLAVGTDSLAMGAKTIVNADAGIGIGLNTLVMADAINGIAIGSNARANHANSIAMGNGSQTTRGAQTDYTAYNMDTPQNSVGEFSVGSEDGQRQITNVAAGSADTDAVNVGQLKVTDAQVSRNTQSITNLNTQVSNLDTRVTNIENGIGDIVTTGSTKYFKTNTDGADANAQGADSVAIGSGSIAAAENSVALGTNSVADEANTVSVGSSTQQRRITNVAAGVNNTDAVNVAQLKASEAGSVRYETNADGSVNYSVLNLGDGSGGTTRIGNVSAAVNDTDAVNYAQLKRSVEEANTYTDQKMGEMNSKIKGVENKMSGGIASAMAMAGLPQAYAPGANMTSIAGGTFNGESAVAIGVSMVSESGGWVYKLQGTSNSQGDYSAAIGAGFQW.

The first 54 residues, 1-54 (MNRIFKVLWNAATGTFVVTSETAKSRGKKNGRRKLAVSALIGLSSIMVSADALA), serve as a signal peptide directing secretion. The tract at residues 55–1372 (NAGNDTGDGV…EEANTYTDQK (1318 aa)) is surface exposed passenger domain. Positions 1373–1461 (MGEMNSKIKG…SAAIGAGFQW (89 aa)) are translocator domain. 4 beta stranded membrane-spanning segments follow: residues 1407–1417 (GANMTSIAGGT), 1421–1431 (ESAVAIGVSMV), 1440–1446 (KLQGTSN), and 1450–1461 (DYSAAIGAGFQW).

The protein belongs to the autotransporter-2 (AT-2) (TC 1.B.40) family. In terms of assembly, homotrimer.

It is found in the cell surface. The protein localises to the cell outer membrane. Functionally, involved in cell aggregation, biofilm formation, and adhesion to human intestinal epithelial cells. The sequence is that of Autotransporter adhesin SadA from Salmonella typhimurium (strain LT2 / SGSC1412 / ATCC 700720).